We begin with the raw amino-acid sequence, 1507 residues long: Transient receptor potential cation channel subfamily M member 2 (1507 aa).

Over residues 1–11 (MEPLDQRRTDS) the composition is skewed to basic and acidic residues. Positions 1–24 (MEPLDQRRTDSDQEEGFGVQSRRA) are disordered. At 1-751 (MEPLDQRRTD…WWGQLCVDNG (751 aa)) the chain is on the cytoplasmic side. ADP-D-ribose-binding residues include T173, N178, R301, G332, and T335. T739 bears the Phosphothreonine mark. The stretch at 752–768 (LWRIILCMLAFPLLFTG) is an intramembrane region. Residues 769–793 (FISFREKRLQALCRLARVRAFFNAP) lie on the Cytoplasmic side of the membrane. Residues 794–814 (VVIFYLNILSYFAFLCLFAYV) traverse the membrane as a helical segment. Residues 815–825 (LMVDFQPSPSW) lie on the Extracellular side of the membrane. The chain crosses the membrane as a helical span at residues 826-846 (CEYLIYLWLFSLVCEETRQLF). Residues E841 and Q844 each coordinate Ca(2+). The Cytoplasmic segment spans residues 847–865 (YDPDGCGLMKMASLYFSDF). The helical transmembrane segment at 866 to 886 (WNKLDVGAILLFIAGLTCRLI) threads the bilayer. N867 provides a ligand contact to Ca(2+). Topologically, residues 887–894 (PATLYPGR) are extracellular. Residues 895–915 (IILSLDFIMFCLRLMHIFTIS) traverse the membrane as a helical segment. The Cytoplasmic segment spans residues 916 to 927 (KTLGPKIIIVKR). The helical transmembrane segment at 928–948 (MMKDVFFFLFLLAVWVVSFGV) threads the bilayer. The Extracellular portion of the chain corresponds to 949 to 968 (AKQAILIHNESRVDWIFRGV). The segment at residues 969 to 983 (IYHSYLTIFGQIPTY) is an intramembrane region (pore-forming). The Selectivity filter signature appears at 977-980 (FGQI). Over 984-1020 (IDGVNFSMDQCSPNGTDPYKPKCPESDWTGQAPAFPE) the chain is Extracellular. C994 and C1006 are joined by a disulfide. Residues 1021 to 1042 (WLTVTLLCLYLLFANILLLNLL) traverse the membrane as a helical segment. Topologically, residues 1043-1077 (IAMFNYTFQEVQEHTDQIWKFQRHDLIEEYHGRPP) are cytoplasmic. A Ca(2+)-binding site is contributed by E1071. The stretch at 1078–1096 (APPPLILLSHLQLLIKRIV) is an intramembrane region. Over 1097 to 1507 (LKIPAKRHKQ…KVASLFGAHF (411 aa)) the chain is Cytoplasmic. One can recognise a Nudix hydrolase domain in the interval 1351-1502 (RWKRNQGGGI…KKILQKVASL (152 aa)). S1379 lines the ADP-D-ribose pocket. The Nudix box motif lies at 1387–1408 (GSREPGKMLPRKLKQVLQQEYW). D1428, R1430, Y1489, and N1491 together coordinate ADP-D-ribose.

It belongs to the transient receptor (TC 1.A.4) family. LTrpC subfamily. TRPM2 sub-subfamily. As to quaternary structure, homotetramer. Post-translationally, phosphorylation of TRPM2 at Thr-739 by protein kinase C (PKC) counteracts the effect of cytosolic Ca(2+) and elevates the temperature threshold. Detected in pancreas beta-cells. Detected in fetal brain cortex neurons (at protein level).

The protein localises to the cell membrane. Its subcellular location is the perikaryon. It is found in the cell projection. It localises to the cytoplasmic vesicle. The protein resides in the lysosome. It carries out the reaction Ca(2+)(in) = Ca(2+)(out). The enzyme catalyses Na(+)(in) = Na(+)(out). Its activity is regulated as follows. Activated by intracellular ADP-ribose, beta-NAD (NAD(+)) and similar compounds, and by oxidative stress caused by reactive oxygen or nitrogen species. Ca(2+) and PI(4,5)P2 are required for channel opening by ADP-ribose. Activation by ADP-ribose and beta-NAD is strongly increased by moderate heat (35 to 40 degrees Celsius). Likewise, reactive oxygen species lower the threshold for activation by moderate heat (37 degrees Celsius). Activated by moderate heat (35 to 40 degrees Celsius). Inactivated by exposure to extracellular pH between 4.0 and 6.5; irreversibly inactivated when open channels are exposed to extracellular pH between 4.0 and 6.5, while pre-exposure of closed channels to extracellular pH 5.5 gives rise to currents that rapidly inactivate, but protects against irreversible inactivation. Inactivated by intracellular ATP. Activated by arachidonic acid. Inhibited by 2-aminoethyl diphenylborinate (2-APB). Functionally, nonselective, voltage-independent cation channel that mediates Na(+) and Ca(2+) influx, leading to increased cytoplasmic Ca(2+) levels. Functions as a ligand-gated ion channel gated by intracellular adenosine diphosphate ribose (ADP-ribose), Ca(2+), warm temperature, and oxidative stress. The precise physiological activators are under debate; the true, physiological activators may be ADP-ribose and ADP-ribose-2'-phosphate. Binding of ADP-ribose to the cytoplasmic Nudix domain causes a conformation change; the channel is primed but still requires Ca(2+) binding to trigger channel opening. Extracellular Ca(2+) passes through the channel and increases channel activity. Also contributes to Ca(2+) release from intracellular stores in response to ADP-ribose. Plays a role in numerous processes that involve signaling via intracellular Ca(2+) levels. Besides, mediates the release of lysosomal Zn(2+) stores in response to reactive oxygen species, leading to increased cytosolic Zn(2+) levels. Plays a role in insulin secretion, a process that requires increased cytoplasmic Ca(2+) levels. Required for normal IFNG and cytokine secretion and normal innate immune immunity in response to bacterial infection. Required for normal phagocytosis and cytokine release by macrophages exposed to zymosan (in vitro). Plays a role in dendritic cell differentiation and maturation, and in dendritic cell chemotaxis via its role in regulating cytoplasmic Ca(2+) levels. Plays a role in the regulation of the reorganization of the actin cytoskeleton and filopodia formation in response to reactive oxygen species via its function in increasing cytoplasmic Ca(2+) and Zn(2+) levels. Confers susceptibility to cell death following oxidative stress. The chain is Transient receptor potential cation channel subfamily M member 2 from Rattus norvegicus (Rat).